A 402-amino-acid polypeptide reads, in one-letter code: MSRVSQARNLGKYFLLIDNMLVVLGFFVVFPLISIRFVDQMGWAAVMVGIALGLRQFIQQGLGIFGGAIADRFGAKPMIVTGMLMRAAGFATMGIAHEPWLLWFSCLLSGLGGTLFDPPRSALVVKLIRPQQRGRFFSLLMMQDSAGAVIGALLGSWLLQYDFRLVCATGAVLFVLCAAFNAWLLPAWKLSTVRTPVREGMTRVMRDKRFVTYVLTLAGYYMLAVQVMLMLPIMVNDVAGAPSAVKWMYAIEACLSLTLLYPIARWSEKHFRLEHRLMAGLLIMSLSMMPVGMVSGLQQLFTLICLFYIGSIIAEPARETLSASLADARARGSYMGFSRLGLAIGGAIGYIGGGWLFDLGKSVHQPELPWMMLGIIGIFTFLALGWQFSQKRAARRLLERDA.

Over 1–12 (MSRVSQARNLGK) the chain is Cytoplasmic. The chain crosses the membrane as a helical span at residues 13–33 (YFLLIDNMLVVLGFFVVFPLI). The Periplasmic segment spans residues 34-98 (SIRFVDQMGW…GFATMGIAHE (65 aa)). A helical membrane pass occupies residues 99–116 (PWLLWFSCLLSGLGGTLF). The Cytoplasmic portion of the chain corresponds to 117–138 (DPPRSALVVKLIRPQQRGRFFS). The chain crosses the membrane as a helical span at residues 139–159 (LLMMQDSAGAVIGALLGSWLL). Residues 160–164 (QYDFR) are Periplasmic-facing. The helical transmembrane segment at 165-185 (LVCATGAVLFVLCAAFNAWLL) threads the bilayer. Over 186–213 (PAWKLSTVRTPVREGMTRVMRDKRFVTY) the chain is Cytoplasmic. The chain crosses the membrane as a helical span at residues 214-234 (VLTLAGYYMLAVQVMLMLPIM). Residues 235 to 243 (VNDVAGAPS) are Periplasmic-facing. The chain crosses the membrane as a helical span at residues 244-264 (AVKWMYAIEACLSLTLLYPIA). The Cytoplasmic segment spans residues 265-276 (RWSEKHFRLEHR). Residues 277 to 297 (LMAGLLIMSLSMMPVGMVSGL) form a helical membrane-spanning segment. Over 298-299 (QQ) the chain is Periplasmic. Residues 300–320 (LFTLICLFYIGSIIAEPARET) form a helical membrane-spanning segment. Residues 321-339 (LSASLADARARGSYMGFSR) are Cytoplasmic-facing. The chain crosses the membrane as a helical span at residues 340 to 360 (LGLAIGGAIGYIGGGWLFDLG). Residues 361-367 (KSVHQPE) lie on the Periplasmic side of the membrane. The chain crosses the membrane as a helical span at residues 368 to 388 (LPWMMLGIIGIFTFLALGWQF). Residues 389–402 (SQKRAARRLLERDA) lie on the Cytoplasmic side of the membrane.

Belongs to the major facilitator superfamily. DHA1 family. MdtH (TC 2.A.1.2.21) subfamily.

The protein resides in the cell inner membrane. Confers resistance to norfloxacin and enoxacin. The polypeptide is Multidrug resistance protein MdtH (Escherichia coli O157:H7).